A 91-amino-acid chain; its full sequence is Apolipoprotein C-III (91 aa).

An N-terminal signal peptide occupies residues 1-20 (MQPRVLLAVTLLALLVSARA). M63 is modified (methionine sulfoxide). Residues 68–91 (DSMKGYWTSLIGRLSGFLDSTPSS) form a lipid-binding region.

It belongs to the apolipoprotein C3 family.

It localises to the secreted. Functionally, component of triglyceride-rich very low density lipoproteins (VLDL) and high density lipoproteins (HDL) in plasma. Plays a multifaceted role in triglyceride homeostasis. Intracellularly, promotes hepatic very low density lipoprotein 1 (VLDL1) assembly and secretion; extracellularly, attenuates hydrolysis and clearance of triglyceride-rich lipoproteins (TRLs). Impairs the lipolysis of TRLs by inhibiting lipoprotein lipase and the hepatic uptake of TRLs by remnant receptors. Formed of several curved helices connected via semiflexible hinges, so that it can wrap tightly around the curved micelle surface and easily adapt to the different diameters of its natural binding partners. This is Apolipoprotein C-III (APOC3) from Cavia porcellus (Guinea pig).